Reading from the N-terminus, the 248-residue chain is Triosephosphate isomerase (248 aa).

9-11 (NWK) serves as a coordination point for substrate. His-94 acts as the Electrophile in catalysis. The active-site Proton acceptor is the Glu-166. Substrate-binding positions include Gly-172, Ser-212, and 233–234 (GG).

It belongs to the triosephosphate isomerase family. In terms of assembly, homodimer.

It localises to the cytoplasm. It carries out the reaction D-glyceraldehyde 3-phosphate = dihydroxyacetone phosphate. Its pathway is carbohydrate biosynthesis; gluconeogenesis. The protein operates within carbohydrate degradation; glycolysis; D-glyceraldehyde 3-phosphate from glycerone phosphate: step 1/1. Its function is as follows. Involved in the gluconeogenesis. Catalyzes stereospecifically the conversion of dihydroxyacetone phosphate (DHAP) to D-glyceraldehyde-3-phosphate (G3P). In Thermoanaerobacter sp. (strain X514), this protein is Triosephosphate isomerase.